The chain runs to 333 residues: MNIGQRYGWEFALAVLLVMEILLFGIANPRMLDINILLFSTSDFICIGIVALPLTMVIVSGGIDISFGSTIGLCAISLGVMNQADIPMAAAIPLTLNVGAMCGIINAALILYTGVNPLVITLGTLYLFGGSALLLSGIFGATGYEGIGGFPQAFTDFANLTLLGLPVPLAMFIICVLVFWLFMHRTHSGRNIFLIGQNNKAAYYTAIPVARTLYFIYSLTGIAAAIAAIVLVSYFGSARSDLGSSFLMPAITAVVLGGANIYGGSGSIIGTALAMLLIGYLQQGLQMIGIPNQISSALSGALLIIAVVGRSISLHRHQIRGWMQRRRNQKLPS.

10 consecutive transmembrane segments (helical) span residues 7–27 (YGWE…FGIA), 45–65 (ICIG…GIDI), 70–90 (TIGL…PMAA), 91–111 (AIPL…ALIL), 119–139 (VITL…SGIF), 162–182 (LLGL…FWLF), 212–232 (TLYF…IVLV), 240–260 (SDLG…GGAN), 261–281 (IYGG…IGYL), and 288–308 (IGIP…IAVV).

It belongs to the binding-protein-dependent transport system permease family. AraH/RbsC subfamily. As to quaternary structure, the complex is composed of two ATP-binding proteins (LsrA), two transmembrane proteins (LsrC and LsrD) and a solute-binding protein (LsrB).

It is found in the cell inner membrane. Functionally, part of the ABC transporter complex LsrABCD involved in autoinducer 2 (AI-2) import. Probably responsible for the translocation of the substrate across the membrane. The protein is Autoinducer 2 import system permease protein LsrD (lsrD) of Photorhabdus temperata.